Here is an 87-residue protein sequence, read N- to C-terminus: Stannin (87 aa).

The Mitochondrial intermembrane segment spans residues M1–T10. A helical membrane pass occupies residues G11–G31. Over C32 to S87 the chain is Cytoplasmic. Residue S49 is modified to Phosphoserine.

It belongs to the stannin family. Monomer.

It is found in the mitochondrion outer membrane. Plays a role in the toxic effects of organotins. Plays a role in endosomal maturation. This Bos taurus (Bovine) protein is Stannin (SNN).